Reading from the N-terminus, the 526-residue chain is Probable feruloyl esterase B-2 (526 aa).

An N-terminal signal peptide occupies residues 1-18 (MTKLSLLPLLALASAVLA). 2 cysteine pairs are disulfide-bonded: C27–C74 and C62–C113. N-linked (GlcNAc...) asparagine glycosylation is found at N52, N97, and N137. Intrachain disulfides connect C186–C441, C255–C272, C281–C291, and C503–C525. S187 functions as the Acyl-ester intermediate in the catalytic mechanism. A glycan (N-linked (GlcNAc...) asparagine) is linked at N233. 5 residues coordinate Ca(2+): D256, D259, A261, D263, and I265. N311 is a glycosylation site (N-linked (GlcNAc...) asparagine). Catalysis depends on charge relay system residues D400 and H440. The N-linked (GlcNAc...) asparagine glycan is linked to N516.

The protein belongs to the tannase family.

It localises to the secreted. The catalysed reaction is feruloyl-polysaccharide + H2O = ferulate + polysaccharide.. Functionally, involved in degradation of plant cell walls. Hydrolyzes the feruloyl-arabinose ester bond in arabinoxylans as well as the feruloyl-galactose and feruloyl-arabinose ester bonds in pectin. In Neosartorya fischeri (strain ATCC 1020 / DSM 3700 / CBS 544.65 / FGSC A1164 / JCM 1740 / NRRL 181 / WB 181) (Aspergillus fischerianus), this protein is Probable feruloyl esterase B-2 (faeB-2).